The following is a 689-amino-acid chain: Armadillo-like helical domain-containing protein 3 (689 aa).

A helical transmembrane segment spans residues 520 to 538 (IFTLALMIVNLFNMFITYG).

It belongs to the ARMH3 family. In terms of assembly, interacts with PI4KB. Interacts with GBF1.

It localises to the golgi apparatus membrane. The protein localises to the cytoplasm. Its function is as follows. Involved in GBF1 recruitment, Golgi maintenance and protein secretion. The polypeptide is Armadillo-like helical domain-containing protein 3 (Homo sapiens (Human)).